Here is a 375-residue protein sequence, read N- to C-terminus: 23S rRNA (uracil(747)-C(5))-methyltransferase RlmC (375 aa).

Residues C3, C11, C14, and C87 each coordinate [4Fe-4S] cluster. Positions 212, 241, 262, and 307 each coordinate S-adenosyl-L-methionine. C334 acts as the Nucleophile in catalysis.

This sequence belongs to the class I-like SAM-binding methyltransferase superfamily. RNA M5U methyltransferase family. RlmC subfamily.

The catalysed reaction is uridine(747) in 23S rRNA + S-adenosyl-L-methionine = 5-methyluridine(747) in 23S rRNA + S-adenosyl-L-homocysteine + H(+). Catalyzes the formation of 5-methyl-uridine at position 747 (m5U747) in 23S rRNA. In Shigella boydii serotype 4 (strain Sb227), this protein is 23S rRNA (uracil(747)-C(5))-methyltransferase RlmC.